Here is a 130-residue protein sequence, read N- to C-terminus: Small ribosomal subunit protein uS11 (130 aa).

Belongs to the universal ribosomal protein uS11 family. As to quaternary structure, part of the 30S ribosomal subunit.

Functionally, located on the platform of the 30S subunit. The chain is Small ribosomal subunit protein uS11 from Thermoplasma acidophilum (strain ATCC 25905 / DSM 1728 / JCM 9062 / NBRC 15155 / AMRC-C165).